We begin with the raw amino-acid sequence, 488 residues long: Signal recognition particle receptor FtsY (488 aa).

The tract at residues 14-82 (DTAPEDVSKP…AVPDDAVHGG (69 aa)) is disordered. The span at 32–67 (VGTSSTGSPVGTGAAMPAAQDAPSPAAPHAIATPDD) shows a compositional bias: low complexity. GTP is bound by residues 287-294 (GVNGVGKT), 369-373 (DTAGR), and 433-436 (TKLD).

The protein belongs to the GTP-binding SRP family. FtsY subfamily. In terms of assembly, part of the signal recognition particle protein translocation system, which is composed of SRP and FtsY. SRP is a ribonucleoprotein composed of Ffh and a 4.5S RNA molecule.

The protein localises to the cell inner membrane. It is found in the cytoplasm. It carries out the reaction GTP + H2O = GDP + phosphate + H(+). Functionally, involved in targeting and insertion of nascent membrane proteins into the cytoplasmic membrane. Acts as a receptor for the complex formed by the signal recognition particle (SRP) and the ribosome-nascent chain (RNC). Interaction with SRP-RNC leads to the transfer of the RNC complex to the Sec translocase for insertion into the membrane, the hydrolysis of GTP by both Ffh and FtsY, and the dissociation of the SRP-FtsY complex into the individual components. This Nitratidesulfovibrio vulgaris (strain ATCC 29579 / DSM 644 / CCUG 34227 / NCIMB 8303 / VKM B-1760 / Hildenborough) (Desulfovibrio vulgaris) protein is Signal recognition particle receptor FtsY.